Reading from the N-terminus, the 259-residue chain is Malonyl-[acyl-carrier protein] O-methyltransferase (259 aa).

This sequence belongs to the methyltransferase superfamily.

The catalysed reaction is malonyl-[ACP] + S-adenosyl-L-methionine = malonyl-[ACP] methyl ester + S-adenosyl-L-homocysteine. Its pathway is cofactor biosynthesis; biotin biosynthesis. Its function is as follows. Converts the free carboxyl group of a malonyl-thioester to its methyl ester by transfer of a methyl group from S-adenosyl-L-methionine (SAM). It allows to synthesize pimeloyl-ACP via the fatty acid synthetic pathway. The sequence is that of Malonyl-[acyl-carrier protein] O-methyltransferase from Anoxybacillus flavithermus (strain DSM 21510 / WK1).